Here is a 379-residue protein sequence, read N- to C-terminus: Mannitol-1-phosphate 5-dehydrogenase (379 aa).

3 to 14 (ALHFGAGNIGRG) serves as a coordination point for NAD(+).

Belongs to the mannitol dehydrogenase family.

It catalyses the reaction D-mannitol 1-phosphate + NAD(+) = beta-D-fructose 6-phosphate + NADH + H(+). The polypeptide is Mannitol-1-phosphate 5-dehydrogenase (Actinobacillus pleuropneumoniae serotype 5b (strain L20)).